The following is a 183-amino-acid chain: Protein SHI RELATED SEQUENCE 6 (183 aa).

The Zn(2+) site is built by C41, C44, C52, C57, C61, and C68. The segment at residues 41 to 68 (CRDCGNRAKKECLFERCRTCCKSRGYNC) is a DNA-binding region (zn(2)-C6 fungal-type; degenerate). The segment covering 79–88 (SSATRSSSSP) has biased composition (low complexity). The interval 79–121 (SSATRSSSSPSERKKKLKIDKQSSPNVSLLPTTTSRQERGFRE) is disordered. Residues 100 to 113 (QSSPNVSLLPTTTS) show a composition bias toward polar residues. The Required for homo- and heterodimerization motif lies at 157–160 (ISGH).

It belongs to the SHI protein family.

It is found in the nucleus. In terms of biological role, transcription activator that binds DNA on 5'-ACTCTAC-3' and promotes auxin homeostasis-regulating gene expression (e.g. YUC genes), as well as genes affecting stamen development, cell expansion and timing of flowering. Synergistically with other SHI-related proteins, regulates gynoecium, stamen and leaf development in a dose-dependent manner, controlling apical-basal patterning. Promotes style and stigma formation, and influences vascular development during gynoecium development. May also have a role in the formation and/or maintenance of the shoot apical meristem (SAM). The chain is Protein SHI RELATED SEQUENCE 6 (SRS6) from Arabidopsis thaliana (Mouse-ear cress).